Reading from the N-terminus, the 213-residue chain is Methylthioribulose-1-phosphate dehydratase (213 aa).

H97 and H99 together coordinate Zn(2+).

Belongs to the aldolase class II family. MtnB subfamily. In terms of assembly, homotetramer. Requires Zn(2+) as cofactor.

It catalyses the reaction 5-(methylsulfanyl)-D-ribulose 1-phosphate = 5-methylsulfanyl-2,3-dioxopentyl phosphate + H2O. The protein operates within amino-acid biosynthesis; L-methionine biosynthesis via salvage pathway; L-methionine from S-methyl-5-thio-alpha-D-ribose 1-phosphate: step 2/6. Functionally, catalyzes the dehydration of methylthioribulose-1-phosphate (MTRu-1-P) into 2,3-diketo-5-methylthiopentyl-1-phosphate (DK-MTP-1-P). This chain is Methylthioribulose-1-phosphate dehydratase, found in Geobacillus sp. (strain WCH70).